A 289-amino-acid polypeptide reads, in one-letter code: 4-hydroxy-3-methylbut-2-enyl diphosphate reductase (289 aa).

Position 12 (Cys-12) interacts with [4Fe-4S] cluster. (2E)-4-hydroxy-3-methylbut-2-enyl diphosphate is bound by residues His-41 and His-84. Residues His-41 and His-84 each contribute to the dimethylallyl diphosphate site. Isopentenyl diphosphate is bound by residues His-41 and His-84. Residue Cys-106 participates in [4Fe-4S] cluster binding. Position 134 (His-134) interacts with (2E)-4-hydroxy-3-methylbut-2-enyl diphosphate. Residue His-134 participates in dimethylallyl diphosphate binding. His-134 lines the isopentenyl diphosphate pocket. Residue Glu-136 is the Proton donor of the active site. Residue Ser-172 participates in (2E)-4-hydroxy-3-methylbut-2-enyl diphosphate binding. Cys-200 is a [4Fe-4S] cluster binding site. The (2E)-4-hydroxy-3-methylbut-2-enyl diphosphate site is built by Ser-229, Asn-231, and Ser-273. Ser-229, Asn-231, and Ser-273 together coordinate dimethylallyl diphosphate. Isopentenyl diphosphate-binding residues include Ser-229, Asn-231, and Ser-273.

Belongs to the IspH family. Requires [4Fe-4S] cluster as cofactor.

It carries out the reaction isopentenyl diphosphate + 2 oxidized [2Fe-2S]-[ferredoxin] + H2O = (2E)-4-hydroxy-3-methylbut-2-enyl diphosphate + 2 reduced [2Fe-2S]-[ferredoxin] + 2 H(+). The catalysed reaction is dimethylallyl diphosphate + 2 oxidized [2Fe-2S]-[ferredoxin] + H2O = (2E)-4-hydroxy-3-methylbut-2-enyl diphosphate + 2 reduced [2Fe-2S]-[ferredoxin] + 2 H(+). It participates in isoprenoid biosynthesis; dimethylallyl diphosphate biosynthesis; dimethylallyl diphosphate from (2E)-4-hydroxy-3-methylbutenyl diphosphate: step 1/1. Its pathway is isoprenoid biosynthesis; isopentenyl diphosphate biosynthesis via DXP pathway; isopentenyl diphosphate from 1-deoxy-D-xylulose 5-phosphate: step 6/6. Its function is as follows. Catalyzes the conversion of 1-hydroxy-2-methyl-2-(E)-butenyl 4-diphosphate (HMBPP) into a mixture of isopentenyl diphosphate (IPP) and dimethylallyl diphosphate (DMAPP). Acts in the terminal step of the DOXP/MEP pathway for isoprenoid precursor biosynthesis. In Opitutus terrae (strain DSM 11246 / JCM 15787 / PB90-1), this protein is 4-hydroxy-3-methylbut-2-enyl diphosphate reductase.